A 267-amino-acid polypeptide reads, in one-letter code: MDKVLSFHQGRLPLLISMPHAGLRLSDAVRDGLVEEARSLPDTDWHIPQLYDFARDLGASVVAAEYSRFVIDLNRPDDDKPLYAGATTGLYPATLFEGEPLFKEGLAPSGEERKRYLEQIWRPYHGTLRRELDRLREQFGYALLWDAHSIRSHIPHLFDGKLPDFNLGTFNGASCDPVLAERLQGVCAEATGYSHVLNGRFKGGHITRHYGDPAKHIHAVQLELAQSTYMEETEPFTYREDLAQPTQVVLKQLLQALLAWGAERYQR.

The protein belongs to the N-formylglutamate deformylase family. Monomer.

The enzyme catalyses N-formyl-L-glutamate + H2O = formate + L-glutamate. It participates in amino-acid degradation; L-histidine degradation into L-glutamate; L-glutamate from N-formimidoyl-L-glutamate (deiminase route): step 2/2. Its activity is regulated as follows. Stimulated by Co(2+). Fe(2+) is also a good activator, particularly at lower concentrations, but it inhibits slightly the activity when used at concentrations over 0.1 mM. Other divalent metals tested (Cd(2+), Ca(2+), Mn(2+), Zn(2+), Ni(2+) and Mg(2+)) are not effective activators. In terms of biological role, catalyzes the hydrolysis of N-formyl-L-glutamate to formate and L-glutamate. The chain is N-formylglutamate deformylase from Pseudomonas putida (Arthrobacter siderocapsulatus).